Here is a 390-residue protein sequence, read N- to C-terminus: METFLLTSESVNEGHPDKLCDQVSDAILDACLEQDPESKVACETCTKTNMVMVFGEITTKANVDYEKIVRDTCREIGFISADVGLDADNCKVLVNIEQQSPDIAQGVHGHLTKKPEEIGAGDQGHMFGYATDETPELMPLTHVLATKLGAKLTEVRKNKTCPWLRPDGKTQVTVEYKNDNGAMVPIRVHTVLISTQHDETVTNDQIAQDLKEHVIKPVIPAKYLDENTIFHLNPSGRFVIGGPHGDAGLTGRKIIIDTYGGWGAHGGGAFSGKDPTKVDRSGAYIVRQAAKSVVASGLARRCIVQVSYAIGVAEPLSVFVDTYKTGTIPDKDILVLIKENFDFRPGMMSINLDLLRGGNFRYQKTAAYGHFGRDDPDFTWETVKVLKPKA.

Residue Glu-9 participates in Mg(2+) binding. ATP is bound at residue His-15. Glu-43 lines the K(+) pocket. Residues Glu-56 and Gln-99 each contribute to the L-methionine site. ATP is bound by residues 167-169 (DGK), 235-238 (SGRF), Asp-246, 252-253 (RK), Ala-269, Lys-273, and Lys-277. Residue Asp-246 coordinates L-methionine. L-methionine is bound at residue Lys-277.

The protein belongs to the AdoMet synthase family. In terms of assembly, homotetramer. Mn(2+) serves as cofactor. It depends on Mg(2+) as a cofactor. Requires Co(2+) as cofactor. The cofactor is K(+).

The protein localises to the cytoplasm. The catalysed reaction is L-methionine + ATP + H2O = S-adenosyl-L-methionine + phosphate + diphosphate. The protein operates within amino-acid biosynthesis; S-adenosyl-L-methionine biosynthesis; S-adenosyl-L-methionine from L-methionine: step 1/1. Catalyzes the formation of S-adenosylmethionine from methionine and ATP. The reaction comprises two steps that are both catalyzed by the same enzyme: formation of S-adenosylmethionine (AdoMet) and triphosphate, and subsequent hydrolysis of the triphosphate. The protein is S-adenosylmethionine synthase 2 (METK2) of Solanum tuberosum (Potato).